The following is a 495-amino-acid chain: Protein nucleotidyltransferase YdiU (495 aa).

Glycine 92, glycine 94, arginine 95, lysine 114, aspartate 126, glycine 127, arginine 177, and arginine 184 together coordinate ATP. Catalysis depends on aspartate 261, which acts as the Proton acceptor. Mg(2+)-binding residues include asparagine 262 and aspartate 271. Residue aspartate 271 coordinates ATP.

It belongs to the SELO family. Mg(2+) serves as cofactor. The cofactor is Mn(2+).

It carries out the reaction L-seryl-[protein] + ATP = 3-O-(5'-adenylyl)-L-seryl-[protein] + diphosphate. The catalysed reaction is L-threonyl-[protein] + ATP = 3-O-(5'-adenylyl)-L-threonyl-[protein] + diphosphate. It catalyses the reaction L-tyrosyl-[protein] + ATP = O-(5'-adenylyl)-L-tyrosyl-[protein] + diphosphate. The enzyme catalyses L-histidyl-[protein] + UTP = N(tele)-(5'-uridylyl)-L-histidyl-[protein] + diphosphate. It carries out the reaction L-seryl-[protein] + UTP = O-(5'-uridylyl)-L-seryl-[protein] + diphosphate. The catalysed reaction is L-tyrosyl-[protein] + UTP = O-(5'-uridylyl)-L-tyrosyl-[protein] + diphosphate. Nucleotidyltransferase involved in the post-translational modification of proteins. It can catalyze the addition of adenosine monophosphate (AMP) or uridine monophosphate (UMP) to a protein, resulting in modifications known as AMPylation and UMPylation. The sequence is that of Protein nucleotidyltransferase YdiU from Bordetella bronchiseptica (strain ATCC BAA-588 / NCTC 13252 / RB50) (Alcaligenes bronchisepticus).